A 212-amino-acid chain; its full sequence is Translation initiation factor IF-3 (212 aa).

Positions 171–212 are disordered; that stretch reads PKSASKKGHTPPKTQVEASKQANESAETEEEKKRCHPTKPVL. The segment covering 182 to 195 has biased composition (polar residues); sequence PKTQVEASKQANES.

The protein belongs to the IF-3 family. In terms of assembly, monomer.

The protein localises to the cytoplasm. In terms of biological role, IF-3 binds to the 30S ribosomal subunit and shifts the equilibrium between 70S ribosomes and their 50S and 30S subunits in favor of the free subunits, thus enhancing the availability of 30S subunits on which protein synthesis initiation begins. The protein is Translation initiation factor IF-3 of Porphyromonas gingivalis (strain ATCC 33277 / DSM 20709 / CIP 103683 / JCM 12257 / NCTC 11834 / 2561).